A 776-amino-acid chain; its full sequence is Protein translocase subunit SecA 2 (776 aa).

ATP is bound by residues glutamine 80, 98-102, and aspartate 486; that span reads GEGKT.

Belongs to the SecA family. As to quaternary structure, monomer and homodimer. Part of the essential Sec protein translocation apparatus which comprises SecA, SecYEG and auxiliary proteins SecDF. Other proteins may also be involved.

It is found in the cell membrane. Its subcellular location is the cytoplasm. The enzyme catalyses ATP + H2O + cellular proteinSide 1 = ADP + phosphate + cellular proteinSide 2.. Its function is as follows. Part of the Sec protein translocase complex. Interacts with the SecYEG preprotein conducting channel. Has a central role in coupling the hydrolysis of ATP to the transfer of proteins into and across the cell membrane, serving as an ATP-driven molecular motor driving the stepwise translocation of polypeptide chains across the membrane. The chain is Protein translocase subunit SecA 2 from Listeria monocytogenes serovar 1/2a (strain ATCC BAA-679 / EGD-e).